The sequence spans 286 residues: Acyl-CoA-binding domain-containing protein 6 (286 aa).

One can recognise an ACB domain in the interval 32-117 (LQCQFEQAAK…VKKLDPDWSP (86 aa)). Residues 59–63 (YARYK), K85, and Y104 each bind an acyl-CoA. ANK repeat units lie at residues 182-211 (EGRS…HINM) and 215-244 (EGQT…DPSL).

The protein localises to the cytoplasm. Its subcellular location is the nucleus. Functionally, binds long-chain acyl-coenzyme A molecules with a strong preference for unsaturated C18:1-CoA. Does not bind fatty acids. Plays a role in protein N-myristoylation. In Xenopus laevis (African clawed frog), this protein is Acyl-CoA-binding domain-containing protein 6 (acbd6).